The primary structure comprises 556 residues: Chaperone protein HscC (556 aa).

This sequence belongs to the heat shock protein 70 family.

Functionally, probable chaperone. Has ATPase activity. Not stimulated by DnaJ. This Escherichia coli (strain K12) protein is Chaperone protein HscC (hscC).